A 115-amino-acid chain; its full sequence is MSEFDKKLNTLGVDRISVSPYKKWSRGYMEPGNIGNGYVSGLKVDAGVVDKTDDMVLDGIGSYDRAETKNAYIGQINMTTASSFSGVGGTVISYDILRNPEVDKAKPLFTEKQWD.

Serine 83 carries the pyruvic acid (Ser) modification.

As to quaternary structure, the proenzyme is a hexamer of identical pi chains; each pi chain monomer is cleaved to form a small (or beta) chain and a large (or alpha) chain by non-hydrolytic self-catalysis. Pyruvate is required as a cofactor.

It catalyses the reaction L-histidine + H(+) = histamine + CO2. The protein is Histidine decarboxylase proenzyme of Lentilactobacillus buchneri (Lactobacillus buchneri).